Consider the following 88-residue polypeptide: DNA-directed RNA polymerase subunit omega (88 aa).

It belongs to the RNA polymerase subunit omega family. As to quaternary structure, the RNAP catalytic core consists of 2 alpha, 1 beta, 1 beta' and 1 omega subunit. When a sigma factor is associated with the core the holoenzyme is formed, which can initiate transcription.

The catalysed reaction is RNA(n) + a ribonucleoside 5'-triphosphate = RNA(n+1) + diphosphate. Functionally, promotes RNA polymerase assembly. Latches the N- and C-terminal regions of the beta' subunit thereby facilitating its interaction with the beta and alpha subunits. The protein is DNA-directed RNA polymerase subunit omega of Thermobifida fusca (strain YX).